The following is a 350-amino-acid chain: 3-dehydroquinate synthase (350 aa).

NAD(+) contacts are provided by residues 106–110, 130–131, K143, and K152; these read GVIGD and TS. Zn(2+)-binding residues include E185, H246, and H263.

It belongs to the sugar phosphate cyclases superfamily. Dehydroquinate synthase family. Requires Co(2+) as cofactor. Zn(2+) is required as a cofactor. NAD(+) serves as cofactor.

It is found in the cytoplasm. The enzyme catalyses 7-phospho-2-dehydro-3-deoxy-D-arabino-heptonate = 3-dehydroquinate + phosphate. Its pathway is metabolic intermediate biosynthesis; chorismate biosynthesis; chorismate from D-erythrose 4-phosphate and phosphoenolpyruvate: step 2/7. Its function is as follows. Catalyzes the conversion of 3-deoxy-D-arabino-heptulosonate 7-phosphate (DAHP) to dehydroquinate (DHQ). The protein is 3-dehydroquinate synthase of Clostridium botulinum (strain Alaska E43 / Type E3).